The primary structure comprises 256 residues: Tetraspanin-32 (256 aa).

4 helical membrane-spanning segments follow: residues 15–35 (LITNFLVLLLGLSMATMVVVI), 61–81 (AFYVGISLAGLLSLGAALSTI), 90–110 (LMAAGFLCFALSFCILVQVAF), and 203–223 (CTSLALTVYAMMLCAFLWFAI).

Belongs to the tetraspanin (TM4SF) family. Expressed exclusively in hematopoietic tissues. Expression detected in spleen, thymus, bone marrow and peripheral blood leukocytes but not in heart, brain, lung, liver, kidney or testis.

The protein resides in the membrane. The sequence is that of Tetraspanin-32 (Tspan32) from Mus musculus (Mouse).